We begin with the raw amino-acid sequence, 227 residues long: Cytochrome c oxidase subunit 2 (227 aa).

The Mitochondrial intermembrane portion of the chain corresponds to Met-1 to Ser-14. The helical transmembrane segment at Pro-15–Met-45 threads the bilayer. Residues Leu-46 to Gln-59 lie on the Mitochondrial matrix side of the membrane. Residues Glu-60–Met-87 form a helical membrane-spanning segment. Over Asp-88 to Thr-227 the chain is Mitochondrial intermembrane. Residues His-161, Cys-196, Glu-198, Cys-200, His-204, and Met-207 each contribute to the Cu cation site. Glu-198 provides a ligand contact to Mg(2+). Tyr-218 carries the post-translational modification Phosphotyrosine.

Belongs to the cytochrome c oxidase subunit 2 family. Component of the cytochrome c oxidase (complex IV, CIV), a multisubunit enzyme composed of 14 subunits. The complex is composed of a catalytic core of 3 subunits MT-CO1, MT-CO2 and MT-CO3, encoded in the mitochondrial DNA, and 11 supernumerary subunits COX4I, COX5A, COX5B, COX6A, COX6B, COX6C, COX7A, COX7B, COX7C, COX8 and NDUFA4, which are encoded in the nuclear genome. The complex exists as a monomer or a dimer and forms supercomplexes (SCs) in the inner mitochondrial membrane with NADH-ubiquinone oxidoreductase (complex I, CI) and ubiquinol-cytochrome c oxidoreductase (cytochrome b-c1 complex, complex III, CIII), resulting in different assemblies (supercomplex SCI(1)III(2)IV(1) and megacomplex MCI(2)III(2)IV(2)). Found in a complex with TMEM177, COA6, COX18, COX20, SCO1 and SCO2. Interacts with TMEM177 in a COX20-dependent manner. Interacts with COX20. Interacts with COX16. It depends on Cu cation as a cofactor.

It is found in the mitochondrion inner membrane. It carries out the reaction 4 Fe(II)-[cytochrome c] + O2 + 8 H(+)(in) = 4 Fe(III)-[cytochrome c] + 2 H2O + 4 H(+)(out). Functionally, component of the cytochrome c oxidase, the last enzyme in the mitochondrial electron transport chain which drives oxidative phosphorylation. The respiratory chain contains 3 multisubunit complexes succinate dehydrogenase (complex II, CII), ubiquinol-cytochrome c oxidoreductase (cytochrome b-c1 complex, complex III, CIII) and cytochrome c oxidase (complex IV, CIV), that cooperate to transfer electrons derived from NADH and succinate to molecular oxygen, creating an electrochemical gradient over the inner membrane that drives transmembrane transport and the ATP synthase. Cytochrome c oxidase is the component of the respiratory chain that catalyzes the reduction of oxygen to water. Electrons originating from reduced cytochrome c in the intermembrane space (IMS) are transferred via the dinuclear copper A center (CU(A)) of subunit 2 and heme A of subunit 1 to the active site in subunit 1, a binuclear center (BNC) formed by heme A3 and copper B (CU(B)). The BNC reduces molecular oxygen to 2 water molecules using 4 electrons from cytochrome c in the IMS and 4 protons from the mitochondrial matrix. This is Cytochrome c oxidase subunit 2 (MT-CO2) from Carlito syrichta (Philippine tarsier).